The primary structure comprises 192 residues: E3 ubiquitin-protein ligase RNF185 (192 aa).

Residues 1 to 13 (MASKGPSASASTE) are compositionally biased toward polar residues. Residues 1–30 (MASKGPSASASTENSNAGGPSGSSNGTGES) are disordered. Residues 1-130 (MASKGPSASA…GGFQGFGFGD (130 aa)) lie on the Cytoplasmic side of the membrane. The segment covering 14 to 27 (NSNAGGPSGSSNGT) has biased composition (low complexity). Residues 29–80 (ESGGQDSTFECNICLDTAKDAVISLCGHLFCWPCLHQWLETRPNRQVCPVCK) form a required for ubiquitin ligase activity and protection against ER stress-induced cell death region. An RING-type zinc finger spans residues 39–80 (CNICLDTAKDAVISLCGHLFCWPCLHQWLETRPNRQVCPVCK). Residues 90–123 (PLYGRGSTGQQDPREKTPPRPQGQRPEPENRGGF) form a disordered region. Residues 131–151 (GGFQMSFGIGAFPFGIFATAF) traverse the membrane as a helical segment. The Mitochondrial intermembrane segment spans residues 152–171 (NINDGRPPPAVPGTPQYVDE). A helical transmembrane segment spans residues 172-192 (QFLSRLFLFVALVIMFWLLIA).

As to quaternary structure, interacts with ATG5 and BNIP1. As to expression, ubiquitously expressed with high expression in testis.

The protein resides in the mitochondrion outer membrane. It localises to the endoplasmic reticulum membrane. The enzyme catalyses S-ubiquitinyl-[E2 ubiquitin-conjugating enzyme]-L-cysteine + [acceptor protein]-L-lysine = [E2 ubiquitin-conjugating enzyme]-L-cysteine + N(6)-ubiquitinyl-[acceptor protein]-L-lysine.. The protein operates within protein modification; protein ubiquitination. Functionally, E3 ubiquitin-protein ligase that regulates selective mitochondrial autophagy by mediating 'Lys-63'-linked polyubiquitination of BNIP1. Acts in the endoplasmic reticulum (ER)-associated degradation (ERAD) pathway, which targets misfolded proteins that accumulate in the endoplasmic reticulum (ER) for ubiquitination and subsequent proteasome-mediated degradation. Protects cells from ER stress-induced apoptosis. Responsible for the cotranslational ubiquitination and degradation of CFTR in the ERAD pathway. Also acts as a regulator of the innate antiviral response by catalyzing 'Lys-27'-linked polyubiquitination of CGAS, thereby promoting CGAS cyclic GMP-AMP synthase activity. Preferentially associates with the E2 enzymes UBE2J1 and UBE2J2. The chain is E3 ubiquitin-protein ligase RNF185 (Rnf185) from Mus musculus (Mouse).